The sequence spans 306 residues: MKHFLTLRDFSKEEILSLVNHASELKKEPKKLLQDKTLAMIFEKNSTRTRMAFELAITELGGKALFLSSNDLQLSRGEPVKDTARVIGAMVDFVMMRVNKHETLLEFARYSKAPVINALSELYHPTQVLGDLLTIKEWNKMQNGIAKVAFIGDSNNMCNSWLIAAAILGFEFSIAIPKNYKISPEIWEFAMKQALISGAKISLSHDRFEALKDKDVVITDTWVSMGEENEKERKIKEFEGFMIDEKAMSVANKDAILLHCLPAYRGYEVSEEIFEKHADVIFEEARNRLYVVKALLCFLDNQRGRE.

Carbamoyl phosphate is bound by residues 46-49 (STRT), glutamine 73, arginine 97, and 124-127 (HPTQ). Residues asparagine 156, aspartate 220, and 224-225 (SM) each bind L-ornithine. Carbamoyl phosphate-binding positions include 260–261 (CL) and arginine 288.

The protein belongs to the aspartate/ornithine carbamoyltransferase superfamily. OTCase family.

It localises to the cytoplasm. The catalysed reaction is carbamoyl phosphate + L-ornithine = L-citrulline + phosphate + H(+). It functions in the pathway amino-acid biosynthesis; L-arginine biosynthesis; L-arginine from L-ornithine and carbamoyl phosphate: step 1/3. In terms of biological role, reversibly catalyzes the transfer of the carbamoyl group from carbamoyl phosphate (CP) to the N(epsilon) atom of ornithine (ORN) to produce L-citrulline. The sequence is that of Ornithine carbamoyltransferase from Campylobacter jejuni (strain RM1221).